The primary structure comprises 419 residues: Arginine biosynthesis bifunctional protein ArgJ 1, mitochondrial (419 aa).

Substrate-binding residues include Lys-177, Thr-188, Glu-275, Asn-414, and Thr-419. The active-site Nucleophile is Thr-188.

It belongs to the ArgJ family. In terms of assembly, heterodimer of an alpha and a beta chain. In terms of processing, the alpha and beta chains are autoproteolytically processed from a single precursor protein within the mitochondrion.

It is found in the mitochondrion matrix. It catalyses the reaction N(2)-acetyl-L-ornithine + L-glutamate = N-acetyl-L-glutamate + L-ornithine. It carries out the reaction L-glutamate + acetyl-CoA = N-acetyl-L-glutamate + CoA + H(+). It participates in amino-acid biosynthesis; L-arginine biosynthesis; L-ornithine and N-acetyl-L-glutamate from L-glutamate and N(2)-acetyl-L-ornithine (cyclic): step 1/1. Its pathway is amino-acid biosynthesis; L-arginine biosynthesis; N(2)-acetyl-L-ornithine from L-glutamate: step 1/4. Catalyzes two activities which are involved in the cyclic version of arginine biosynthesis: the synthesis of acetylglutamate from glutamate and acetyl-CoA, and of ornithine by transacetylation between acetylornithine and glutamate. This is Arginine biosynthesis bifunctional protein ArgJ 1, mitochondrial from Sclerotinia sclerotiorum (strain ATCC 18683 / 1980 / Ss-1) (White mold).